A 394-amino-acid chain; its full sequence is GTPase Era, mitochondrial (394 aa).

In terms of domain architecture, Era-type G spans 32–280; it reads KCLQLAVIGA…RDHLMSISPQ (249 aa). Residues 40 to 47 are G1; it reads GAPNVGKS. A GTP-binding site is contributed by 40-47; the sequence is GAPNVGKS. The segment at 66 to 70 is G2; it reads DTTTR. Positions 87 to 90 are G3; sequence DSPG. GTP is bound by residues 87-91 and 160-163; these read DSPGA and NKID. Residues 160–163 form a G4 region; that stretch reads NKID. Positions 259–261 are G5; that stretch reads VSS.

This sequence belongs to the TRAFAC class TrmE-Era-EngA-EngB-Septin-like GTPase superfamily. Era GTPase family.

It is found in the mitochondrion matrix. The protein resides in the mitochondrion inner membrane. Its function is as follows. Probable GTPase that plays a role in the mitochondrial ribosomal small subunit assembly. Specifically binds the 12S mitochondrial rRNA (12S mt-rRNA) to a 33 nucleotide section delineating the 3' terminal stem-loop region. May act as a chaperone that protects the 12S mt-rRNA on the 28S mitoribosomal subunit during ribosomal small subunit assembly. May play a role in positively regulating mitochondrial function. Plays a role in fertility. This chain is GTPase Era, mitochondrial, found in Caenorhabditis elegans.